The sequence spans 457 residues: UDP-N-acetylmuramate--L-alanine ligase (457 aa).

109 to 115 is an ATP binding site; sequence GTDGKTT.

It belongs to the MurCDEF family.

The protein localises to the cytoplasm. It carries out the reaction UDP-N-acetyl-alpha-D-muramate + L-alanine + ATP = UDP-N-acetyl-alpha-D-muramoyl-L-alanine + ADP + phosphate + H(+). The protein operates within cell wall biogenesis; peptidoglycan biosynthesis. Cell wall formation. The sequence is that of UDP-N-acetylmuramate--L-alanine ligase from Thermotoga neapolitana (strain ATCC 49049 / DSM 4359 / NBRC 107923 / NS-E).